The following is a 127-amino-acid chain: Small ribosomal subunit protein uS12 (127 aa).

The residue at position 89 (Asp-89) is a 3-methylthioaspartic acid. The tract at residues 104 to 127 (TQGVKDRKQARSKYGTKRAKAGKK) is disordered. Residues 113–127 (ARSKYGTKRAKAGKK) are compositionally biased toward basic residues.

It belongs to the universal ribosomal protein uS12 family. Part of the 30S ribosomal subunit. Contacts proteins S8 and S17. May interact with IF1 in the 30S initiation complex.

Functionally, with S4 and S5 plays an important role in translational accuracy. Interacts with and stabilizes bases of the 16S rRNA that are involved in tRNA selection in the A site and with the mRNA backbone. Located at the interface of the 30S and 50S subunits, it traverses the body of the 30S subunit contacting proteins on the other side and probably holding the rRNA structure together. The combined cluster of proteins S8, S12 and S17 appears to hold together the shoulder and platform of the 30S subunit. This chain is Small ribosomal subunit protein uS12, found in Herminiimonas arsenicoxydans.